A 117-amino-acid polypeptide reads, in one-letter code: Holo-[acyl-carrier-protein] synthase (117 aa).

Residues Asp8 and Glu58 each contribute to the Mg(2+) site.

This sequence belongs to the P-Pant transferase superfamily. AcpS family. It depends on Mg(2+) as a cofactor.

It is found in the cytoplasm. The enzyme catalyses apo-[ACP] + CoA = holo-[ACP] + adenosine 3',5'-bisphosphate + H(+). In terms of biological role, transfers the 4'-phosphopantetheine moiety from coenzyme A to a Ser of acyl-carrier-protein. This chain is Holo-[acyl-carrier-protein] synthase, found in Shouchella clausii (strain KSM-K16) (Alkalihalobacillus clausii).